A 518-amino-acid chain; its full sequence is Membrane-bound lytic murein transglycosylase F (518 aa).

The signal sequence occupies residues 1–21 (MKKLKINYLFIGILALLLAVA). Residues 22–269 (LWPSIPWFGK…RIEEKYLGHG (248 aa)) form a non-LT domain region. The tract at residues 270–518 (DDFDYVDTRT…SRKGSEEKQN (249 aa)) is LT domain. Glu314 is a catalytic residue.

It in the N-terminal section; belongs to the bacterial solute-binding protein 3 family. The protein in the C-terminal section; belongs to the transglycosylase Slt family.

The protein resides in the cell outer membrane. The catalysed reaction is Exolytic cleavage of the (1-&gt;4)-beta-glycosidic linkage between N-acetylmuramic acid (MurNAc) and N-acetylglucosamine (GlcNAc) residues in peptidoglycan, from either the reducing or the non-reducing ends of the peptidoglycan chains, with concomitant formation of a 1,6-anhydrobond in the MurNAc residue.. Functionally, murein-degrading enzyme that degrades murein glycan strands and insoluble, high-molecular weight murein sacculi, with the concomitant formation of a 1,6-anhydromuramoyl product. Lytic transglycosylases (LTs) play an integral role in the metabolism of the peptidoglycan (PG) sacculus. Their lytic action creates space within the PG sacculus to allow for its expansion as well as for the insertion of various structures such as secretion systems and flagella. The polypeptide is Membrane-bound lytic murein transglycosylase F (Shigella boydii serotype 18 (strain CDC 3083-94 / BS512)).